Here is a 263-residue protein sequence, read N- to C-terminus: (E)-2-((N-methylformamido)methylene)succinate hydrolase (263 aa).

The Nucleophile role is filled by S96. Active-site residues include N120 and H241.

The protein belongs to the AB hydrolase superfamily. Monomer.

It catalyses the reaction (E)-2-((N-methylformamido) methylene)succinate + 2 H2O + H(+) = succinate semialdehyde + methylamine + formate + CO2. In terms of biological role, involved in the degradation of the pyridine ring of trigonelline (TG; N-methylnicotinate) into succinate and methylamine as carbon and nitrogen sources, respectively. Catalyzes the hydrolysis of (E)-2-((N-methylformamido)methylene)succinate (MFMS) into formic acid, succinate semialdehyde (SSA), methylamine and carbon dioxide. The chain is (E)-2-((N-methylformamido)methylene)succinate hydrolase from Acinetobacter baylyi (strain ATCC 33305 / BD413 / ADP1).